The following is a 311-amino-acid chain: MVSTATQIGHFSFDNCLMNAAGVYCMTKEELMEVEKSQAASFVTKTGTLEVRPGNPEPRYADTRLGSINSMGLPNNGFRYYLDFVSDLAKTGQHKPHFLSVVGLSPTETETILKAIMASDYEGLVELNLSCPNVPGKPQIAYDFETTDQLLENIFTYYTKPLGIKLPPYFDIVHFDQAAAIFNKYPLSFVNCVNSIGNGLVIKDEQVLIKPKNGFGGIGGDYIKPTALANVHAFYKRLKPSIHIIGTGGVKTGRDAFEHILCGASMVQIGTALHQEGPAIFERVTKELKTIMVEKGYQSLDDFRGNLRYKD.

Residues K45, 69 to 73 (NSMGL), and N128 each bind substrate. Position 45-46 (45-46 (KT)) interacts with FMN. N128 contacts FMN. C131 (nucleophile) is an active-site residue. FMN contacts are provided by K165 and V193. 194-195 (NS) contacts substrate. Residues G220, 248 to 249 (GG), and 270 to 271 (GT) contribute to the FMN site.

This sequence belongs to the dihydroorotate dehydrogenase family. Type 1 subfamily. As to quaternary structure, homodimer. It depends on FMN as a cofactor.

The protein localises to the cytoplasm. It catalyses the reaction (S)-dihydroorotate + fumarate = orotate + succinate. It participates in pyrimidine metabolism; UMP biosynthesis via de novo pathway. Functionally, catalyzes the conversion of dihydroorotate to orotate with fumarate as the electron acceptor. This is Putative dihydroorotate dehydrogenase A (fumarate) (pyrD) from Streptococcus pyogenes serotype M1.